A 133-amino-acid chain; its full sequence is UPF0292 protein TK1411 (133 aa).

The region spanning 20–100 (EGALIVEGLR…SVDIETWKEL (81 aa)) is the Toprim domain. Positions 26, 69, and 71 each coordinate Mg(2+).

This sequence belongs to the UPF0292 family. It depends on Mg(2+) as a cofactor.

This chain is UPF0292 protein TK1411, found in Thermococcus kodakarensis (strain ATCC BAA-918 / JCM 12380 / KOD1) (Pyrococcus kodakaraensis (strain KOD1)).